A 264-amino-acid chain; its full sequence is MEKIKVCLVDDNKELVSMLESYVAAQDDMEVIGTAYNGQECLNLLKDKQPDVLVLDIIMPHLDGLAVLEKMRHIERLRQPSVIMLTAFGQEDVTKKAVDLGASYFILKPFDMENLTSHIRQVSGKANATIKRPLPSFRSATTVDGKPKNLDASITSIIHEIGVPAHIKGYMYLREAISMVYNDIELLGSITKVLYPDIAKKYNTTASRVERAIRHAIEVAWSRGNIDSISSLFGYTVSMSKAKPTNSEFIAMVADKLRLEHKAS.

The Response regulatory domain occupies 5-123 (KVCLVDDNKE…NLTSHIRQVS (119 aa)). Ca(2+) is bound by residues D10, D11, and D56. 4-aspartylphosphate is present on D56. The segment at residues 196–215 (PDIAKKYNTTASRVERAIRH) is a DNA-binding region (H-T-H motif).

Ca(2+) serves as cofactor. In terms of processing, phosphorylated by KinA and KinB.

Its subcellular location is the cytoplasm. May play the central regulatory role in sporulation. It may be an element of the effector pathway responsible for the activation of sporulation genes in response to nutritional stress. Spo0A may act in concert with Spo0H (a sigma factor) to control the expression of some genes that are critical to the sporulation process. Repressor of abrB, activator of the spoIIa operon. Binds the DNA sequence 5'-TGNCGAA-3' (0A box). This chain is Stage 0 sporulation protein A (spo0A), found in Bacillus anthracis.